Consider the following 320-residue polypeptide: Pyrroline-5-carboxylate reductase 1, mitochondrial (320 aa).

Ser-2 carries the N-acetylserine modification. NADP(+)-binding positions include 6–11 (IGAGQL) and Ser-34. Residues Ala-8, Gln-10, Leu-11, Ser-34, Asp-36, Asn-56, Val-70, Lys-71, and Ala-97 each coordinate NADPH. Residues Asn-56, 69–72 (AVKP), and 95–97 (CAA) each bind NADP(+). Glu-164 serves as a coordination point for L-proline. Residue Asn-230 coordinates NADPH. The L-proline site is built by Ala-237 and Thr-238. Position 278 is a phosphoserine (Ser-278). The segment at 292–320 (LDSPPGTSLAPSGHSKLLPRSMAPAGKQD) is disordered.

This sequence belongs to the pyrroline-5-carboxylate reductase family. Homodecamer; composed of 5 homodimers. Interacts with LTO1.

The protein resides in the mitochondrion. It catalyses the reaction L-proline + NADP(+) = (S)-1-pyrroline-5-carboxylate + NADPH + 2 H(+). The catalysed reaction is L-proline + NAD(+) = (S)-1-pyrroline-5-carboxylate + NADH + 2 H(+). The protein operates within amino-acid biosynthesis; L-proline biosynthesis; L-proline from L-glutamate 5-semialdehyde: step 1/1. Oxidoreductase that catalyzes the last step in proline biosynthesis, which corresponds to the reduction of pyrroline-5-carboxylate to L-proline using NAD(P)H. At physiologic concentrations, has higher specific activity in the presence of NADH. Involved in the cellular response to oxidative stress. The sequence is that of Pyrroline-5-carboxylate reductase 1, mitochondrial (PYCR1) from Bos taurus (Bovine).